The primary structure comprises 302 residues: Zinc import ATP-binding protein ZnuC (302 aa).

The ABC transporter domain occupies 13–228 (VSLANAGVRR…PEYLKLFGRR (216 aa)). 45-52 (GPNGSGKS) is a binding site for ATP.

Belongs to the ABC transporter superfamily. Zinc importer (TC 3.A.1.15.5) family. In terms of assembly, the complex is composed of two ATP-binding proteins (ZnuC), two transmembrane proteins (ZnuB) and a solute-binding protein (ZnuA).

Its subcellular location is the cell inner membrane. It carries out the reaction Zn(2+)(out) + ATP(in) + H2O(in) = Zn(2+)(in) + ADP(in) + phosphate(in) + H(+)(in). Functionally, part of the ABC transporter complex ZnuABC involved in zinc import. Responsible for energy coupling to the transport system. In Rhizobium meliloti (strain 1021) (Ensifer meliloti), this protein is Zinc import ATP-binding protein ZnuC.